The primary structure comprises 298 residues: Mitochondrial dicarboxylate transporter (298 aa).

Solcar repeat units follow at residues 11 to 95 (KNIK…LKEN), 103 to 195 (TNMA…FKNY), and 205 to 289 (SKNY…LKKH). The next 6 helical transmembrane spans lie at 17–37 (WWYG…LDLA), 58–76 (ILAN…AAVL), 105–126 (MAYL…GNFA), 170–189 (GWKP…VVTY), 211–231 (LTAS…ADVM), and 265–283 (WLPS…FFAI).

The protein belongs to the mitochondrial carrier (TC 2.A.29) family. In terms of assembly, homodimer. Binds to the TIM22 translocation complex during import.

The protein localises to the mitochondrion inner membrane. In terms of biological role, mitochondrial dicarboxylic transporter catalyzing the exchange of dicarboxylic acids like malate and succinate for inorganic phosphate. Required for growth on ethanol and acetate. The polypeptide is Mitochondrial dicarboxylate transporter (DIC1) (Saccharomyces cerevisiae (strain ATCC 204508 / S288c) (Baker's yeast)).